Consider the following 168-residue polypeptide: Endoribonuclease YbeY (168 aa).

The Zn(2+) site is built by His-132, His-136, and His-142.

The protein belongs to the endoribonuclease YbeY family. Zn(2+) serves as cofactor.

The protein localises to the cytoplasm. Functionally, single strand-specific metallo-endoribonuclease involved in late-stage 70S ribosome quality control and in maturation of the 3' terminus of the 16S rRNA. The sequence is that of Endoribonuclease YbeY from Clostridium perfringens (strain SM101 / Type A).